We begin with the raw amino-acid sequence, 638 residues long: Chaperone protein DnaK (638 aa).

Thr-198 carries the post-translational modification Phosphothreonine; by autocatalysis. Residues 599 to 638 (IYESQQAEGGAEGGPSGHHDDGIVDADYEEVKDDNTKKSA) form a disordered region. Positions 621 to 630 (IVDADYEEVK) are enriched in acidic residues.

The protein belongs to the heat shock protein 70 family.

In terms of biological role, acts as a chaperone. This is Chaperone protein DnaK from Allorhizobium ampelinum (strain ATCC BAA-846 / DSM 112012 / S4) (Agrobacterium vitis (strain S4)).